We begin with the raw amino-acid sequence, 338 residues long: DNA-directed RNA polymerase I subunit RPA43 (338 aa).

Residues Glu209–Leu338 are disordered. A phosphoserine mark is found at Ser242, Ser304, and Ser316. Thr322 is modified (phosphothreonine). A Phosphoserine modification is found at Ser328. The span at Ser328–Leu338 shows a compositional bias: basic residues.

This sequence belongs to the eukaryotic RPA43 RNA polymerase subunit family. As to quaternary structure, component of the RNA polymerase I (Pol I) complex consisting of 13 subunits: a ten-subunit catalytic core composed of POLR1A/RPA1, POLR1B/RPA2, POLR1C/RPAC1, POLR1D/RPAC2, POLR1H/RPA12, POLR2E/RPABC1, POLR2F/RPABC2, POLR2H/RPABC3, POLR2K/RPABC4 and POLR2L/RPABC5; a mobile stalk subunit POLR1F/RPA43 protruding from the core and additional subunits homologous to general transcription factors POLR1E/RPA49 and POLR1G/RPA34. Interacts with RRN3/TIF-IA. As to expression, widely expressed. Expressed in all fetal and adult tissues tested, with highest expression in fetal lung, liver, and kidney, and low expression in all adult tissues.

It is found in the nucleus. It localises to the nucleolus. Functionally, component of RNA polymerase I (Pol I), a DNA-dependent RNA polymerase which synthesizes ribosomal RNA precursors using the four ribonucleoside triphosphates as substrates. Through its association with RRN3/TIF-IA may be involved in recruitment of Pol I to rDNA promoters. In Homo sapiens (Human), this protein is DNA-directed RNA polymerase I subunit RPA43.